The sequence spans 95 residues: Virion membrane protein OPG135 (95 aa).

Residues 1-22 (MSCYTAILKSVGGLALFQDANG) form the signal peptide. At 23–45 (AIDLCRHFFMYFCEQKLRPNSFW) the chain is on the intravirion side. A helical membrane pass occupies residues 46–66 (FVVVRAIASMIMYLVLGIALL). The Virion surface portion of the chain corresponds to 67-83 (YISEQDDKKNTNNASNS). The tract at residues 76 to 95 (NTNNASNSNKLNESSINSNS) is disordered. Residues 77–95 (TNNASNSNKLNESSINSNS) show a composition bias toward low complexity. Residues Asn-79 and Asn-87 are each glycosylated (N-linked (GlcNAc...) asparagine; by host).

It belongs to the oerthopoxvirus OPG135 family.

It localises to the virion membrane. The protein resides in the host cytoplasm. In terms of biological role, envelope protein. Required for an early step in virion morphogenesis. This Homo sapiens (Human) protein is Virion membrane protein OPG135 (OPG135).